A 324-amino-acid chain; its full sequence is Myb-like DNA-binding protein myb-1 (324 aa).

2 HTH myb-type domains span residues 4 to 59 (MPDQ…KPGL) and 60 to 110 (NHGP…NRKK). The disordered stretch occupies residues 107–231 (NRKKNQLRRQ…PTGSTLRLLT (125 aa)). A compositionally biased stretch (polar residues) spans 155-165 (RRPSSPSSFND). The segment covering 166-175 (SLHHRVHESI) has biased composition (basic and acidic residues). 2 stretches are compositionally biased toward low complexity: residues 183–192 (QQQQQQQQQQ) and 222–231 (PTGSTLRLLT).

The protein resides in the nucleus. This Neurospora crassa (strain ATCC 24698 / 74-OR23-1A / CBS 708.71 / DSM 1257 / FGSC 987) protein is Myb-like DNA-binding protein myb-1 (rca-1).